We begin with the raw amino-acid sequence, 140 residues long: 3-hydroxyacyl-[acyl-carrier-protein] dehydratase FabZ (140 aa).

Residue histidine 47 is part of the active site.

Belongs to the thioester dehydratase family. FabZ subfamily.

The protein resides in the cytoplasm. The catalysed reaction is a (3R)-hydroxyacyl-[ACP] = a (2E)-enoyl-[ACP] + H2O. Involved in unsaturated fatty acids biosynthesis. Catalyzes the dehydration of short chain beta-hydroxyacyl-ACPs and long chain saturated and unsaturated beta-hydroxyacyl-ACPs. The protein is 3-hydroxyacyl-[acyl-carrier-protein] dehydratase FabZ of Streptococcus sanguinis (strain SK36).